Here is a 60-residue protein sequence, read N- to C-terminus: UPF0434 protein NMCC_0628 (60 aa).

This sequence belongs to the UPF0434 family.

This is UPF0434 protein NMCC_0628 from Neisseria meningitidis serogroup C (strain 053442).